The chain runs to 29 residues: Cytochrome b6-f complex subunit 8 (29 aa).

Residues I3 to V23 form a helical membrane-spanning segment.

The protein belongs to the PetN family. In terms of assembly, the 4 large subunits of the cytochrome b6-f complex are cytochrome b6, subunit IV (17 kDa polypeptide, PetD), cytochrome f and the Rieske protein, while the 4 small subunits are PetG, PetL, PetM and PetN. The complex functions as a dimer.

The protein resides in the plastid. Its subcellular location is the chloroplast thylakoid membrane. Its function is as follows. Component of the cytochrome b6-f complex, which mediates electron transfer between photosystem II (PSII) and photosystem I (PSI), cyclic electron flow around PSI, and state transitions. In Coffea arabica (Arabian coffee), this protein is Cytochrome b6-f complex subunit 8.